Here is a 307-residue protein sequence, read N- to C-terminus: tRNA dimethylallyltransferase (307 aa).

7 to 14 (GPTAGGKT) serves as a coordination point for ATP. 9 to 14 (TAGGKT) provides a ligand contact to substrate. Residues 32-35 (DSRQ) are interaction with substrate tRNA.

Belongs to the IPP transferase family. Monomer. It depends on Mg(2+) as a cofactor.

It catalyses the reaction adenosine(37) in tRNA + dimethylallyl diphosphate = N(6)-dimethylallyladenosine(37) in tRNA + diphosphate. Catalyzes the transfer of a dimethylallyl group onto the adenine at position 37 in tRNAs that read codons beginning with uridine, leading to the formation of N6-(dimethylallyl)adenosine (i(6)A). In Elusimicrobium minutum (strain Pei191), this protein is tRNA dimethylallyltransferase.